The chain runs to 299 residues: Putative ankyrin repeat protein R864 (299 aa).

ANK repeat units lie at residues S78 to S107, N108 to S137, N139 to S167, N168 to S197, Y199 to A227, Y228 to N257, and D258 to T287.

This Acanthamoeba polyphaga mimivirus (APMV) protein is Putative ankyrin repeat protein R864.